The sequence spans 587 residues: Protein cereblon (587 aa).

Disordered stretches follow at residues 1 to 56, 78 to 113, and 157 to 195; these read MDEE…PAEY, DVLQDDTASEGSHPSSDMSLESPGSEDDSDVQGLPN, and FSQERRRSRTSEETSQEEAAEEPDDPPPQQPPLPPIDIG. 2 stretches are compositionally biased toward polar residues: residues 22 to 31 and 86 to 96; these read EDQSQSQGLQ and SEGSHPSSDMS. Over residues 159 to 168 the composition is skewed to basic and acidic residues; it reads QERRRSRTSE. A compositionally biased stretch (acidic residues) spans 170–181; sequence TSQEEAAEEPDD. Positions 182-191 are enriched in pro residues; the sequence is PPPQQPPLPP. The Lon N-terminal domain occupies 227 to 453; the sequence is HMLIFLHHHI…LIKSTFKDET (227 aa). The CULT domain occupies 452 to 561; the sequence is ETLFFCRYCN…LSGSSVRIGK (110 aa). Residues Cys-457, Cys-460, Cys-526, and Cys-529 each coordinate Zn(2+).

This sequence belongs to the CRBN family. Likely a component of a DCX (DDB1-CUL4-X-box) protein ligase complex. May interact with pic/DDB1. In terms of processing, ubiquitinated.

The protein resides in the nucleus. It participates in protein modification; protein ubiquitination. Functionally, substrate recognition component of a DCX (DDB1-CUL4-X-box) E3 protein ligase complex that mediates the ubiquitination and subsequent proteasomal degradation of target proteins. Has an essential role in mediating growth by negatively regulating insulin signaling. It also has a role in maintaining presynaptic function in the neuromuscular junction synapses of third-instar larvae. The polypeptide is Protein cereblon (Drosophila simulans (Fruit fly)).